Reading from the N-terminus, the 357-residue chain is Arginine kinase (357 aa).

The residue at position 2 (A2) is an N-acetylalanine. The 83-residue stretch at 9 to 91 (KLEEGFKKLE…FDPIIEDYHK (83 aa)) folds into the Phosphagen kinase N-terminal domain. 64-68 (GVGVY) contributes to the L-arginine binding site. The Phosphagen kinase C-terminal domain maps to 119–356 (FVISTRVRCG…LELIKIEKEM (238 aa)). Residues 122–126 (STRVR) and H185 each bind ATP. E225 serves as a coordination point for L-arginine. An ATP-binding site is contributed by R229. Position 271 (C271) interacts with L-arginine. ATP contacts are provided by residues 280-284 (RASVH) and 309-314 (RGTRGE). Residue E314 coordinates L-arginine.

Belongs to the ATP:guanido phosphotransferase family.

The catalysed reaction is L-arginine + ATP = N(omega)-phospho-L-arginine + ADP + H(+). The chain is Arginine kinase from Carcinus maenas (Common shore crab).